A 71-amino-acid chain; its full sequence is Cruzioseptin-2 (71 aa).

The N-terminal stretch at methionine 1–cysteine 22 is a signal peptide. The propeptide occupies glutamate 23–glutamate 43. Glutamine 68 is modified (glutamine amide). The propeptide occupies glutamate 70–glutamine 71.

In terms of tissue distribution, expressed by the skin glands.

It is found in the secreted. Its function is as follows. Has antimicrobial activity against Gram-negative bacterium E.coli (MIC=26.35 uM), against Gram-positive bacterium S.aureus (MIC=6.59 uM) and against fungus C.albicans (MIC=13.18 uM). At higher concentrations also has a bactericidal and fungicidal effect. Has hemagglutinating activity against horse erythrocytes. The polypeptide is Cruzioseptin-2 (Cruziohyla calcarifer (Splendid leaf frog)).